The following is a 208-amino-acid chain: Uracil phosphoribosyltransferase (208 aa).

5-phospho-alpha-D-ribose 1-diphosphate-binding positions include arginine 78, arginine 103, and 130-138; that span reads DPMLATGGT. Uracil-binding positions include isoleucine 193 and 198–200; that span reads GDA. Aspartate 199 provides a ligand contact to 5-phospho-alpha-D-ribose 1-diphosphate.

The protein belongs to the UPRTase family. It depends on Mg(2+) as a cofactor.

The catalysed reaction is UMP + diphosphate = 5-phospho-alpha-D-ribose 1-diphosphate + uracil. Its pathway is pyrimidine metabolism; UMP biosynthesis via salvage pathway; UMP from uracil: step 1/1. Allosterically activated by GTP. Its function is as follows. Catalyzes the conversion of uracil and 5-phospho-alpha-D-ribose 1-diphosphate (PRPP) to UMP and diphosphate. This is Uracil phosphoribosyltransferase from Maridesulfovibrio salexigens (strain ATCC 14822 / DSM 2638 / NCIMB 8403 / VKM B-1763) (Desulfovibrio salexigens).